The chain runs to 364 residues: D-alanine--D-alanine ligase (364 aa).

The ATP-grasp domain maps to 134 to 344 (KVLLKSFNIP…YESLVDKLIT (211 aa)). 167-222 (NNKLNYPVIVKPSVLGSSIGINVAYNVSQIEKYIEEAFEYDLTVVVEKFIKAREIE) is a binding site for ATP. The Mg(2+) site is built by D297, E311, and N313.

Belongs to the D-alanine--D-alanine ligase family. It depends on Mg(2+) as a cofactor. The cofactor is Mn(2+).

It localises to the cytoplasm. It catalyses the reaction 2 D-alanine + ATP = D-alanyl-D-alanine + ADP + phosphate + H(+). It functions in the pathway cell wall biogenesis; peptidoglycan biosynthesis. Functionally, cell wall formation. In Borrelia recurrentis (strain A1), this protein is D-alanine--D-alanine ligase.